Here is a 95-residue protein sequence, read N- to C-terminus: UPF0358 protein BcerKBAB4_3775 (95 aa).

Belongs to the UPF0358 family.

This Bacillus mycoides (strain KBAB4) (Bacillus weihenstephanensis) protein is UPF0358 protein BcerKBAB4_3775.